A 637-amino-acid chain; its full sequence is Penicillin-binding protein 1A (637 aa).

The tract at residues 62-224 (LIADLGSERR…NQYDPYSHPE (163 aa)) is transglycosylase. Catalysis depends on Glu-91, which acts as the Proton donor; for transglycosylase activity. A transpeptidase region spans residues 298-612 (EVYTNVDSKV…RLTPIVGDGF (315 aa)). Ser-371 acts as the Acyl-ester intermediate; for transpeptidase activity in catalysis.

In the N-terminal section; belongs to the glycosyltransferase 51 family. This sequence in the C-terminal section; belongs to the transpeptidase family.

It localises to the secreted. It catalyses the reaction [GlcNAc-(1-&gt;4)-Mur2Ac(oyl-L-Ala-gamma-D-Glu-L-Lys-D-Ala-D-Ala)](n)-di-trans,octa-cis-undecaprenyl diphosphate + beta-D-GlcNAc-(1-&gt;4)-Mur2Ac(oyl-L-Ala-gamma-D-Glu-L-Lys-D-Ala-D-Ala)-di-trans,octa-cis-undecaprenyl diphosphate = [GlcNAc-(1-&gt;4)-Mur2Ac(oyl-L-Ala-gamma-D-Glu-L-Lys-D-Ala-D-Ala)](n+1)-di-trans,octa-cis-undecaprenyl diphosphate + di-trans,octa-cis-undecaprenyl diphosphate + H(+). The enzyme catalyses Preferential cleavage: (Ac)2-L-Lys-D-Ala-|-D-Ala. Also transpeptidation of peptidyl-alanyl moieties that are N-acyl substituents of D-alanine.. Its pathway is cell wall biogenesis; peptidoglycan biosynthesis. Cell wall formation. This Streptococcus oralis protein is Penicillin-binding protein 1A (ponA).